The sequence spans 100 residues: MRLTPHEQERLLLSYAAELARRRQARGLKLNHPEAVAIITDHILEGARDGRTVAELMISGRDVLGRDDVLVGVPEMLDDVQVEATFPDGTKLVTVHHPIP.

The protein belongs to the urease gamma subunit family. As to quaternary structure, heterotrimer of UreA (gamma), UreB (beta) and UreC (alpha) subunits. Three heterotrimers associate to form the active enzyme.

Its subcellular location is the cytoplasm. The enzyme catalyses urea + 2 H2O + H(+) = hydrogencarbonate + 2 NH4(+). It participates in nitrogen metabolism; urea degradation; CO(2) and NH(3) from urea (urease route): step 1/1. This is Urease subunit gamma from Mycolicibacterium gilvum (strain PYR-GCK) (Mycobacterium gilvum (strain PYR-GCK)).